Reading from the N-terminus, the 291-residue chain is Lipase (291 aa).

Positions 1 to 17 (MRSSLVLFFVSAWTALA) are cleaved as a signal peptide. The propeptide occupies 18–22 (SPIRR). Disulfide bonds link Cys44-Cys290, Cys58-Cys63, and Cys126-Cys129. The active-site Nucleophile is Ser168. Residues Asp223 and His280 each act as charge relay system in the active site.

It belongs to the AB hydrolase superfamily. Lipase family.

It carries out the reaction a triacylglycerol + H2O = a diacylglycerol + a fatty acid + H(+). This chain is Lipase (LIP), found in Thermomyces lanuginosus (Humicola lanuginosa).